A 512-amino-acid polypeptide reads, in one-letter code: Cercosporin MFS transporter CTB4 (512 aa).

Transmembrane regions (helical) follow at residues 72 to 92 (WVIT…SSVF), 110 to 130 (VVLG…IFWG), 142 to 162 (LLAG…ARSL), 170 to 190 (FLGG…LADI), 202 to 222 (TVGA…SVLV), 230 to 250 (WIAN…FPFL), 306 to 326 (ILLM…NFFL), 343 to 363 (ASLP…LLSF), 383 to 403 (LLLM…FAWT), 407 to 427 (TMNP…IHLI), 456 to 476 (LFAA…GVKW), and 480 to 500 (ILAL…YFGA).

Belongs to the major facilitator superfamily. CAR1 family.

It is found in the cell membrane. In terms of biological role, MFS transporter; part of the gene cluster that mediates the biosynthesis of cercosporin, a light-activated, non-host-selective toxin. The perylenequinone chromophore of cercosporin absorbs light energy to attain an electronically-activated triplet state and produces active oxygen species such as the hydroxyl radical, superoxide, hydrogen peroxide or singlet oxygen upon reaction with oxygen molecules. These reactive oxygen species cause damage to various cellular components including lipids, proteins and nucleic acids. Responsible for secretion and accumulation of cercosporin, but does not play any roles in self-protection against the toxicity of cercosporin. The protein is Cercosporin MFS transporter CTB4 of Cercospora nicotianae (Barn spot disease fungus).